Consider the following 263-residue polypeptide: MSQLLSTPLMAVNSNPRFLSSSSVLVTGGFAVKRHGFALKPTTKTVKLFSVKSRQTDYFEKQRFGDSSSSPSPAEGLPARFYVGHSIYKGKAALTVDPRAPEFVALDSGAFKLSKDGFLLLQFAPSAGVRQYDWSKKQVFSLSVTEIGTLVSLGPRESCEFFHDPFKGKSDEGKVRKVLKVEPLPDGSGHFFNLSVQNKLVNVDESIYIPITRAEFAVLISAFNFVLPYLIGWHAFANSIKPEETSRVNNASPNYGGDYEWNR.

Residues 1 to 47 (MSQLLSTPLMAVNSNPRFLSSSSVLVTGGFAVKRHGFALKPTTKTVK) constitute a chloroplast transit peptide. Residues 89-94 (KGKAAL) form a required for ssDNA binding region. The short motif at 167–180 (KGKSDEGKVRKVLK) is the Nuclear localization signal element.

Belongs to the Whirly family. As to quaternary structure, homotetramer.

The protein resides in the plastid. Its subcellular location is the chloroplast. It is found in the nucleus. Functionally, single-stranded DNA-binding protein that functions in both chloroplasts and nucleus. In chloroplasts, maintains plastid genome stability by preventing break-induced and short homology-dependent illegitimate recombinations. In nucleus, modulates telomere length homeostasis by inhibiting the action of the telomerase at the extreme termini of chromosomes. Is recruited to a distal element upstream of the kinesin KP1 to mediate the transcriptional repression of KP1. Is required for full salicylic acid-dependent plant disease resistance responses. Can bind double-stranded DNA in vivo. The sequence is that of Single-stranded DNA-binding protein WHY1, chloroplastic (WHY1) from Arabidopsis thaliana (Mouse-ear cress).